The following is a 503-amino-acid chain: Maturase K (503 aa).

Belongs to the intron maturase 2 family. MatK subfamily.

It localises to the plastid. It is found in the chloroplast. Functionally, usually encoded in the trnK tRNA gene intron. Probably assists in splicing its own and other chloroplast group II introns. In Rubus ursinus (California blackberry), this protein is Maturase K.